We begin with the raw amino-acid sequence, 134 residues long: Retinol-binding protein 2 (134 aa).

All-trans-retinol contacts are provided by K41 and Q109.

It belongs to the calycin superfamily. Fatty-acid binding protein (FABP) family.

The protein resides in the cytoplasm. Its function is as follows. Intracellular transport of retinol. In Rattus norvegicus (Rat), this protein is Retinol-binding protein 2 (Rbp2).